The sequence spans 1624 residues: Latent-transforming growth factor beta-binding protein 4 (1624 aa).

A signal peptide spans 1-27 (MPRPGTSGRRPLLLVLLLPLFAAATSA). The disordered stretch occupies residues 125–146 (RRPRGPGGRGLLRRRPPQRAPA). In terms of domain architecture, EGF-like 1 spans 149 to 181 (APVLCPLICHNGGVCVKPDRCLCPPDFAGKFCQ). Cystine bridges form between Cys-153/Cys-163, Cys-157/Cys-169, Cys-171/Cys-180, Cys-289/Cys-311, Cys-298/Cys-324, and Cys-312/Cys-327. The 53-residue stretch at 287 to 339 (GYCFRELRGGECASPLPGLRTQEVCCRGAGLAWGVHDCQLCSERLGNSERVSA) folds into the TB 1 domain. N-linked (GlcNAc...) asparagine glycosylation is present at Asn-352. An EGF-like 2; calcium-binding domain is found at 357-397 (DVDECATGGRCQHGECANTRGGYTCVCPDGFLLDSSRSSCI). 7 disulfide bridges follow: Cys-361–Cys-372, Cys-367–Cys-381, Cys-383–Cys-396, Cys-409–Cys-431, Cys-418–Cys-444, Cys-432–Cys-447, and Cys-433–Cys-459. A TB 2 domain is found at 407–459 (GPCFRVLRDGGCSLPILRNITKQICCCSRVGKAWGRGCQLCPPFGSEGFREIC). Asn-425 carries N-linked (GlcNAc...) asparagine glycosylation. Residues 474–546 (YNTRPLGQEP…PEIPESGPSS (73 aa)) are disordered. Positions 487–500 (SLSQPRTLPATSRP) are enriched in polar residues. The span at 508–522 (HRLEPRPEPRPDPRP) shows a compositional bias: basic and acidic residues. The 42-residue stretch at 545–586 (SSGMCQRNPQVCGPGRCISRPSGYTCACDSGFRLSPQGTRCI) folds into the EGF-like 3 domain. Intrachain disulfides connect Cys-549-Cys-561, Cys-556-Cys-570, Cys-572-Cys-585, Cys-591-Cys-603, Cys-598-Cys-612, Cys-614-Cys-627, Cys-633-Cys-645, Cys-640-Cys-654, Cys-656-Cys-669, Cys-675-Cys-687, Cys-682-Cys-696, Cys-698-Cys-707, Cys-714-Cys-726, Cys-721-Cys-735, Cys-737-Cys-750, Cys-756-Cys-768, Cys-763-Cys-777, Cys-779-Cys-792, Cys-838-Cys-851, Cys-845-Cys-860, Cys-862-Cys-876, Cys-882-Cys-894, Cys-888-Cys-903, Cys-905-Cys-918, Cys-924-Cys-935, Cys-930-Cys-944, Cys-946-Cys-959, Cys-1053-Cys-1065, Cys-1059-Cys-1074, and Cys-1076-Cys-1089. The EGF-like 4; calcium-binding domain maps to 587 to 628 (DVDECRRVPPPCAPGRCENSPGSFRCVCGPGFRAGPRAAECL). An EGF-like 5; calcium-binding domain is found at 629–670 (DVDECHRVPPPCDLGRCENTPGSFLCVCPAGYQAAPHGASCQ). Positions 671-708 (DVDECTQSPGLCGRGACKNLPGSFRCVCPAGFRGSACE) constitute an EGF-like 6; calcium-binding domain. The region spanning 710–751 (DVDECAQEPPPCGPGRCDNTAGSFHCACPAGFRSRGPGAPCQ) is the EGF-like 7; calcium-binding domain. The 42-residue stretch at 752–793 (DVDECARSPPPCTYGRCENTEGSFQCVCPMGFQPNTAGSECE) folds into the EGF-like 8; calcium-binding domain. The 44-residue stretch at 834-877 (DVDECSSGAPPCGPHGHCTNTEGSFRCSCAPGYRAPSGRPGPCA) folds into the EGF-like 9; calcium-binding domain. The region spanning 878–919 (DVNECLEGDFCFPHGECLNTDGSFACTCAPGYRPGPRGASCL) is the EGF-like 10; calcium-binding domain. One can recognise an EGF-like 11; calcium-binding domain in the interval 920-960 (DVDECSEEDLCQSGICTNTDGSFECICPPGHRAGPDLASCL). Positions 1049-1090 (DVDECRNRSFCGAHAVCQNLPGSFQCLCDQGYEGARDGRHCV) constitute an EGF-like 12; calcium-binding domain. Asn-1055 carries N-linked (GlcNAc...) asparagine glycosylation. The segment at 1130–1179 (GRCVPPRTSAGTFPGSQPQAPASPVLPARPPPPPLPRRPSTPRQGPVGSG) is disordered. Residues 1138 to 1149 (SAGTFPGSQPQA) show a composition bias toward polar residues. Positions 1156–1168 (PARPPPPPLPRRP) are enriched in pro residues. The 55-residue stretch at 1181-1235 (RECYFDTAAPDACDNILARNVTWQECCCTVGEGWGSGCRIQQCPGTETAEYQSLC) folds into the TB 3 domain. Cystine bridges form between Cys-1183–Cys-1206, Cys-1193–Cys-1218, Cys-1207–Cys-1223, Cys-1208–Cys-1235, Cys-1257–Cys-1270, Cys-1265–Cys-1279, Cys-1281–Cys-1294, Cys-1300–Cys-1312, Cys-1307–Cys-1321, and Cys-1323–Cys-1336. An N-linked (GlcNAc...) asparagine glycan is attached at Asn-1200. The EGF-like 13; calcium-binding domain occupies 1253–1295 (DVDECQLFRDQVCKSGVCVNTAPGYSCYCSNGYYYHTQRLECI). The EGF-like 14; calcium-binding domain occupies 1296–1337 (DNDECADEEPACEGGRCVNTVGSYHCTCEPPLVLDGSQRRCV). The N-linked (GlcNAc...) asparagine glycan is linked to Asn-1339. The 54-residue stretch at 1349-1402 (GVCWQEVGADLVCSHPRLDRQATYTECCCLYGEAWGMDCALCPAQDSDDFEALC) folds into the TB 4 domain. Cystine bridges form between Cys-1351-Cys-1375, Cys-1361-Cys-1387, Cys-1376-Cys-1390, and Cys-1377-Cys-1402. The segment covering 1446-1458 (ALPYDPYPPPPGP) has biased composition (pro residues). The tract at residues 1446–1524 (ALPYDPYPPP…PPEGGSYAGS (79 aa)) is disordered. Over residues 1501-1510 (RSRDTRRSFP) the composition is skewed to basic and acidic residues. EGF-like domains are found at residues 1533-1573 (EAEE…MACV) and 1574-1618 (DINE…HHCA). Intrachain disulfides connect Cys-1537–Cys-1548, Cys-1543–Cys-1557, Cys-1559–Cys-1572, Cys-1578–Cys-1593, Cys-1588–Cys-1602, and Cys-1604–Cys-1617.

This sequence belongs to the LTBP family. In terms of assembly, forms part of the large latent transforming growth factor beta precursor complex; removal is essential for activation of complex. Interacts with LTBP1 and TGFB1. Interacts with EFEMP2; this interaction promotes fibrillar deposition of EFEMP2. Contains hydroxylated asparagine residues. As to expression, highly expressed in heart, skeletal muscle, pancreas, uterus, and small intestine. Weakly expressed in placenta and lung.

It localises to the secreted. The protein localises to the extracellular space. The protein resides in the extracellular matrix. Key regulator of transforming growth factor beta (TGFB1, TGFB2 and TGFB3) that controls TGF-beta activation by maintaining it in a latent state during storage in extracellular space. Associates specifically via disulfide bonds with the Latency-associated peptide (LAP), which is the regulatory chain of TGF-beta, and regulates integrin-dependent activation of TGF-beta. The protein is Latent-transforming growth factor beta-binding protein 4 (LTBP4) of Homo sapiens (Human).